A 383-amino-acid polypeptide reads, in one-letter code: S-adenosylmethionine synthase (383 aa).

His22 lines the ATP pocket. Asp24 is a binding site for Mg(2+). Residue Glu50 participates in K(+) binding. Glu63 and Gln99 together coordinate L-methionine. Residues 99–109 (QSLEINQAVLK) form a flexible loop region. ATP is bound by residues 160–162 (DMK), Asp235, 241–242 (RK), Ser258, and Lys262. Position 235 (Asp235) interacts with L-methionine. Lys266 is a binding site for L-methionine.

The protein belongs to the AdoMet synthase family. In terms of assembly, homotetramer; dimer of dimers. It depends on Mg(2+) as a cofactor. K(+) is required as a cofactor.

The protein localises to the cytoplasm. The enzyme catalyses L-methionine + ATP + H2O = S-adenosyl-L-methionine + phosphate + diphosphate. It participates in amino-acid biosynthesis; S-adenosyl-L-methionine biosynthesis; S-adenosyl-L-methionine from L-methionine: step 1/1. Catalyzes the formation of S-adenosylmethionine (AdoMet) from methionine and ATP. The overall synthetic reaction is composed of two sequential steps, AdoMet formation and the subsequent tripolyphosphate hydrolysis which occurs prior to release of AdoMet from the enzyme. The protein is S-adenosylmethionine synthase of Mycoplasma genitalium (strain ATCC 33530 / DSM 19775 / NCTC 10195 / G37) (Mycoplasmoides genitalium).